The chain runs to 414 residues: Phosphoglycerate kinase (414 aa).

Val23, Asp24, Phe25, Asn26, Arg39, Ser62, His63, Gly65, and Arg66 together coordinate (2R)-3-phosphoglycerate. Position 75 is a phosphotyrosine (Tyr75). Ser76 is subject to Phosphoserine. Leu121 and Arg122 together coordinate (2R)-3-phosphoglycerate. At Ser143 the chain carries Phosphoserine. (2R)-3-phosphoglycerate is bound by residues His168 and Arg169. Phosphoserine is present on residues Ser172, Ser173, and Ser183. Gly211 serves as a coordination point for ADP. CDP is bound at residue Gly211. The AMP site is built by Ala212 and Lys213. Ala212 contacts ATP. Mg(2+) is bound at residue Ala212. Ala215 and Asp216 together coordinate Mg(2+). Asp216 contributes to the CDP binding site. Residue Lys217 coordinates AMP. Lys217 serves as a coordination point for ATP. Gly235 contacts ADP. Position 235 (Gly235) interacts with CDP. Gly236 is a binding site for AMP. Gly236 contacts ATP. Residues Ser253 and Ser260 each carry the phosphoserine modification. Thr299 carries the post-translational modification Phosphothreonine. An AMP-binding site is contributed by Gly310. Gly310 serves as a coordination point for ATP. Position 328 is a phosphoserine (Ser328). CDP is bound by residues Gly335, Ala337, and Phe340. Phe340 contributes to the ADP binding site. Position 341 (Glu341) interacts with AMP. Glu341 contributes to the ATP binding site. Residue Ser351 is modified to Phosphoserine. ATP is bound by residues Asp372 and Thr373. Asp372 is a Mg(2+) binding site. Position 373 is a phosphothreonine (Thr373). Residues Ser387, Ser390, Ser412, and Ser413 each carry the phosphoserine modification.

The protein belongs to the phosphoglycerate kinase family. In terms of assembly, monomer. Mg(2+) is required as a cofactor.

It localises to the cytoplasm. The protein resides in the mitochondrion. It catalyses the reaction (2R)-3-phosphoglycerate + ATP = (2R)-3-phospho-glyceroyl phosphate + ADP. It participates in carbohydrate degradation; glycolysis; pyruvate from D-glyceraldehyde 3-phosphate: step 2/5. Functionally, catalyzes one of the two ATP producing reactions in the glycolytic pathway via the reversible conversion of 1,3-diphosphoglycerate to 3-phosphoglycerate. Both L- and D- forms of purine and pyrimidine nucleotides can be used as substrates, but the activity is much lower on pyrimidines. Negatively regulates the biosynthesis of acetyl-CoA from pyruvate in the mitochondrion. This Schizosaccharomyces pombe (strain 972 / ATCC 24843) (Fission yeast) protein is Phosphoglycerate kinase (pgk1).